We begin with the raw amino-acid sequence, 67 residues long: Protein AaeX (67 aa).

A run of 2 helical transmembrane segments spans residues Leu3–Ile23 and Gly39–Phe59.

Belongs to the AaeX family.

It is found in the cell membrane. In Yersinia pseudotuberculosis serotype O:1b (strain IP 31758), this protein is Protein AaeX.